We begin with the raw amino-acid sequence, 70 residues long: Large ribosomal subunit protein bL31 (70 aa).

4 residues coordinate Zn(2+): C16, C18, C37, and C40.

The protein belongs to the bacterial ribosomal protein bL31 family. Type A subfamily. As to quaternary structure, part of the 50S ribosomal subunit. Zn(2+) serves as cofactor.

In terms of biological role, binds the 23S rRNA. The sequence is that of Large ribosomal subunit protein bL31 from Proteus mirabilis (strain HI4320).